Here is a 215-residue protein sequence, read N- to C-terminus: uncharacterized protein (215 aa).

Residues 1–29 (MDKVQSGFLILFLFLMECQLHLCLPYADG) form the signal peptide. Over 30–100 (LHPTGNITGL…IIRHRPALVK (71 aa)) the chain is Extracellular. The chain crosses the membrane as a helical span at residues 101-121 (VILISSVAFSIALICGMAISY). Over 122–215 (MIYRLAQAEE…ASHNGKMEDL (94 aa)) the chain is Cytoplasmic. The disordered stretch occupies residues 191–215 (LKEEQNSVTENKTKNASHNGKMEDL). Residues 196–208 (NSVTENKTKNASH) show a composition bias toward polar residues.

The protein resides in the membrane. This is an uncharacterized protein from Homo sapiens (Human).